A 65-amino-acid polypeptide reads, in one-letter code: Large ribosomal subunit protein bL35 (65 aa).

It belongs to the bacterial ribosomal protein bL35 family.

The chain is Large ribosomal subunit protein bL35 from Proteus mirabilis (strain HI4320).